Reading from the N-terminus, the 1316-residue chain is DNA-directed RNA polymerase subunit beta' (1316 aa).

Residues cysteine 60, cysteine 62, cysteine 75, and cysteine 78 each coordinate Zn(2+). Aspartate 535, aspartate 537, and aspartate 539 together coordinate Mg(2+). Positions 891, 968, 975, and 978 each coordinate Zn(2+).

Belongs to the RNA polymerase beta' chain family. As to quaternary structure, the RNAP catalytic core consists of 2 alpha, 1 beta, 1 beta' and 1 omega subunit. When a sigma factor is associated with the core the holoenzyme is formed, which can initiate transcription. It depends on Mg(2+) as a cofactor. Zn(2+) is required as a cofactor.

It catalyses the reaction RNA(n) + a ribonucleoside 5'-triphosphate = RNA(n+1) + diphosphate. DNA-dependent RNA polymerase catalyzes the transcription of DNA into RNA using the four ribonucleoside triphosphates as substrates. The protein is DNA-directed RNA polymerase subunit beta' of Mycobacterium bovis (strain BCG / Tokyo 172 / ATCC 35737 / TMC 1019).